The primary structure comprises 745 residues: Cellulose synthase-like protein E2 (745 aa).

The segment covering 1-14 (MAGSGGGVVSGGRQ) has biased composition (gly residues). Positions 1–20 (MAGSGGGVVSGGRQRGPPLF) are disordered. Transmembrane regions (helical) follow at residues 29–49 (AMAAYRVSAATVFAGVLLIWL) and 66–86 (WAWLGMLAAELWFGFYWVLTL). Catalysis depends on residues aspartate 155 and aspartate 458. 5 consecutive transmembrane segments (helical) span residues 541-561 (FPTLYYVTIPSLCFLNGISLF), 568-588 (WFIPFAYVMVAAYSCSLAESL), 658-678 (AMFVILTTVALLNLACMVLGI), 686-706 (GPGGLETLFLQAVLCVLIVAI), and 723-743 (LPASVARVSICFVLPLCILSI).

The protein belongs to the glycosyltransferase 2 family. Plant cellulose synthase-like E subfamily.

It localises to the golgi apparatus membrane. Its function is as follows. Thought to be a Golgi-localized beta-glycan synthase that polymerize the backbones of noncellulosic polysaccharides (hemicelluloses) of plant cell wall. The protein is Cellulose synthase-like protein E2 (CSLE2) of Oryza sativa subsp. japonica (Rice).